The following is a 333-amino-acid chain: Homeobox protein SIX3 (333 aa).

Residues 57–71 show a composition bias toward gly residues; sequence GGAGGAGGGSGGGGS. 3 disordered regions span residues 57-76, 233-252, and 259-333; these read GGAGGAGGGSGGGGSRAPPE, NPSKKRELAQATGLTPTQVG, and RQRD…ECDV. The interval 73-120 is interaction with TLE5; it reads APPEELSMFQLPTLNFSPEQVASVCETLEETGDIERLGRFLWSLPVAP. The homeobox DNA-binding region spans 207-266; it reads GEQKTHCFKERTRSLLREWYLQDPYPNPSKKRELAQATGLTPTQVGNWFKNRRQRDRAAA. The interval 233 to 235 is bind to RHO promoter; that stretch reads NPS. Low complexity predominate over residues 294-310; the sequence is SAESPSTAASPTTSVSS. The segment covering 317-333 has biased composition (polar residues); it reads TGTSILSVTSSDSECDV.

This sequence belongs to the SIX/Sine oculis homeobox family. As to quaternary structure, interacts with EYA4; translocates EYA4 from the cytoplasm to the nucleus and promotes activation of their target genes. Interacts with MTA1 and HDAC2; represses its own transcription. Interacts with MTA1; facilitates the binding of SIX3 to the core DNA motif of SIX3 promoter. Interacts with EYA1; promotes EYA1 translocation to the nucleus. Interacts with TLE1 and TLE5 (via Q domain); can act in combination with either TLE1 and/or TLE5 leading to transcriptional repression or activation, respectively. Interacts (via homeobox) with NR4A3; differentially regulates the transcriptional activities NR4A3. Interacts with GMNN. Interacts with TLE4. In terms of tissue distribution, expressed in ependymal cells during the formation of the lateral wall.

Its subcellular location is the nucleus. Functionally, transcriptional regulator which can act as both a transcriptional repressor and activator by binding a ATTA homeodomain core recognition sequence on these target genes. During forebrain development represses WNT1 expression allowing zona limitans intrathalamica formation and thereby ensuring proper anterio-posterior patterning of the diencephalon and formation of the rostral diencephalon. Acts as a direct upstream activator of SHH expression in the rostral diencephalon ventral midline and that in turn SHH maintains its expression. In addition, Six3 activity is required for the formation of the telencephalon. During postnatal stages of brain development is necessary for ependymal cell maturation by promoting the maturation of radial glia into ependymal cells through regulation of neuroblast proliferation and migration. Acts on the proliferation and differentiation of neural progenitor cells through activating transcription of CCND1 AND CCND2. During early lens formation plays a role in lens induction and specification by activating directly PAX6 in the presumptive lens ectoderm. In turn PAX6 activates SIX3 resulting in activation of PDGFRA and CCND1 promoting cell proliferation. Also is required for the neuroretina development by directly suppressing WNT8B expression in the anterior neural plate territory. Its action during retina development and lens morphogenesis is TLE5 and TLE4-dependent manner. Furthermore, during eye development regulates several genes expression. Before and during early lens development represses the CRYGF promoter by binding a SIX repressor element. Directly activates RHO transcription, or cooperates with CRX or NRL. Six3 also functions in the formation of the proximodistal axis of the optic cup, and promotes the formation of optic vesicles-like structures. During pituitary development, acts in parallel or alternatively with HESX1 to control cell proliferation through Wnt/beta-catenin pathway. Plays a role in eye development by suppressing WNT1 expression and in dorsal-ventral patterning by repressing BMP signaling pathway. The sequence is that of Homeobox protein SIX3 (Six3) from Mus musculus (Mouse).